A 1399-amino-acid polypeptide reads, in one-letter code: DNA-directed RNA polymerase subunit beta' (1399 aa).

The Zn(2+) site is built by C70, C72, C85, and C88. Residues D460, D462, and D464 each contribute to the Mg(2+) site. 4 residues coordinate Zn(2+): C814, C888, C895, and C898.

Belongs to the RNA polymerase beta' chain family. As to quaternary structure, the RNAP catalytic core consists of 2 alpha, 1 beta, 1 beta' and 1 omega subunit. When a sigma factor is associated with the core the holoenzyme is formed, which can initiate transcription. It depends on Mg(2+) as a cofactor. Zn(2+) serves as cofactor.

It catalyses the reaction RNA(n) + a ribonucleoside 5'-triphosphate = RNA(n+1) + diphosphate. In terms of biological role, DNA-dependent RNA polymerase catalyzes the transcription of DNA into RNA using the four ribonucleoside triphosphates as substrates. This Ectopseudomonas mendocina (strain ymp) (Pseudomonas mendocina) protein is DNA-directed RNA polymerase subunit beta'.